The primary structure comprises 244 residues: Cell adhesion molecule CEACAM4 (244 aa).

Residues 1–35 form the signal peptide; the sequence is MGPPSAAPRGGHRPWQGLLITASLLTFWHPPTTVQ. Residues 36 to 139 form the Ig-like V-type domain; the sequence is FTIEALPSSA…DSDQATGQLH (104 aa). At 36 to 155 the chain is on the extracellular side; the sequence is FTIEALPSSA…PGLPVGAVAG (120 aa). N-linked (GlcNAc...) asparagine glycans are attached at residues asparagine 57, asparagine 104, asparagine 111, and asparagine 126. Residues 156-176 traverse the membrane as a helical segment; it reads IVTGVLVGVALVAALVCFLLL. The Cytoplasmic segment spans residues 177–244; that stretch reads SRTGRASIQR…QIDHKADVVS (68 aa). The segment at 186-215 is disordered; that stretch reads RDLREQPPPASTPGHGPSHRSTFSAPLPSP. Residues 222-236 carry the ITAM motif; it reads YEELLYSDANIYCQI.

This sequence belongs to the immunoglobulin superfamily. CEA family. In terms of assembly, interacts through its phosphorylated ITAM domain with the SH2 domain-containing cytoplasmic proteins involved in signaling processes during phagocytosis. Post-translationally, N-glycosylated. In terms of processing, the cytoplasmic ITAM-like sequence becomes tyrosine phosphorylated by SRC family PTKs upon ligand-mediated receptor clustering and allows to initiate phagocytosis of bound ligand. As to expression, granulocytes.

It localises to the membrane. Functionally, granulocyte orphan receptor that acts as an trigger efficient phagocytosis of attached particles. This is Cell adhesion molecule CEACAM4 from Homo sapiens (Human).